The following is a 94-amino-acid chain: Cell division topological specificity factor (94 aa).

The protein belongs to the MinE family.

Its function is as follows. Prevents the cell division inhibition by proteins MinC and MinD at internal division sites while permitting inhibition at polar sites. This ensures cell division at the proper site by restricting the formation of a division septum at the midpoint of the long axis of the cell. The protein is Cell division topological specificity factor of Synechococcus sp. (strain CC9311).